The chain runs to 179 residues: Nucleoside-triphosphatase THEP1 (179 aa).

Residues 7–14 and 98–105 each bind ATP; these read GMPGVGKT and IIIIDEIG.

This sequence belongs to the THEP1 NTPase family.

The enzyme catalyses a ribonucleoside 5'-triphosphate + H2O = a ribonucleoside 5'-diphosphate + phosphate + H(+). Has nucleotide phosphatase activity towards ATP, GTP, CTP, TTP and UTP. May hydrolyze nucleoside diphosphates with lower efficiency. This chain is Nucleoside-triphosphatase THEP1, found in Pyrococcus abyssi (strain GE5 / Orsay).